The chain runs to 1935 residues: Rho GTPase-activating protein 21 (1935 aa).

The tract at residues 1–46 (MATRRATVPEQQQQQPSSPGSEISKNKDGQEQSEMVSPTEEEGFCW) is disordered. The PDZ domain maps to 78–163 (HTTVKDEENG…TLELSVMPKD (86 aa)). Disordered stretches follow at residues 212–237 (VEVPPSGTSLTKQQSSRPVRTATTQP), 339–373 (PPSYGGHSESMFSTRPSQAEESPSPTNHYASPGSH), 413–456 (QNTT…QERL), 673–718 (TSTS…DSNS), and 862–919 (NSKT…DVFS). Polar residues-rich tracts occupy residues 217 to 237 (SGTSLTKQQSSRPVRTATTQP), 348 to 373 (SMFSTRPSQAEESPSPTNHYASPGSH), and 413 to 429 (QNTTDYDQMLPNRSSGQ). Composition is skewed to low complexity over residues 441–451 (PQSVQMRQRSV) and 673–685 (TSTSASSSSPAHT). Residues 708–718 (SPEANAGDSNS) are compositionally biased toward polar residues. Residues 863 to 884 (SKTERSKSCDEGLDDYKDEGKL) show a composition bias toward basic and acidic residues. In terms of domain architecture, PH spans 920 to 1033 (DSNKEGFLYF…WIKAIQENGN (114 aa)). A disordered region spans residues 1056 to 1126 (TMMSSSSNKS…KGSWRRIMKK (71 aa)). Over residues 1059-1072 (SSSSNKSEQSPKPS) the composition is skewed to low complexity. A compositionally biased stretch (basic and acidic residues) spans 1097-1119 (PKQESERRLFSKDDISPPKDKGS). In terms of domain architecture, Rho-GAP spans 1140 to 1332 (VRLDDCPPAH…TLIQQHDWFF (193 aa)). Disordered regions lie at residues 1341–1393 (ITAV…GSGK), 1411–1431 (RKRKKQRDKPQPSSSEDELDN), 1488–1510 (SEATSPCPPKLSEPPIVNHRLPP), 1525–1548 (SMSDSGTMLSTSSQASAQRSKPKV), 1637–1665 (HRSKVEEPTRNVQVNSEGSPSCTEGSITP), 1688–1733 (SIRQ…EPEE), and 1838–1925 (SELS…SGTQ). Residues 1345-1355 (QEESTVESQPV) show a composition bias toward polar residues. Low complexity predominate over residues 1376–1393 (SDSASDSAKSKGSWGSGK). Polar residues-rich tracts occupy residues 1525-1543 (SMSDSGTMLSTSSQASAQR) and 1646-1662 (RNVQVNSEGSPSCTEGS). Basic and acidic residues predominate over residues 1691–1705 (QKTDSECSAESKNEE). Composition is skewed to polar residues over residues 1872 to 1889 (QVSTAIVTAGSESPSQGT) and 1898 to 1911 (NGDSFQSKNKNNFS).

The protein localises to the golgi apparatus membrane. The protein resides in the cell junction. It is found in the cytoplasmic vesicle membrane. Its subcellular location is the cytoplasm. It localises to the cytoskeleton. GTPase-activating protein (GAP) for rhoa and cdc42. The polypeptide is Rho GTPase-activating protein 21 (arhgap21) (Xenopus tropicalis (Western clawed frog)).